The primary structure comprises 376 residues: Phosphoserine aminotransferase (376 aa).

L-glutamate is bound at residue arginine 42. Pyridoxal 5'-phosphate contacts are provided by tryptophan 104, threonine 163, aspartate 188, and glutamine 211. Lysine 212 carries the N6-(pyridoxal phosphate)lysine modification. 253 to 254 is a binding site for pyridoxal 5'-phosphate; the sequence is NT.

The protein belongs to the class-V pyridoxal-phosphate-dependent aminotransferase family. SerC subfamily. Homodimer. Pyridoxal 5'-phosphate is required as a cofactor.

The protein localises to the cytoplasm. The enzyme catalyses O-phospho-L-serine + 2-oxoglutarate = 3-phosphooxypyruvate + L-glutamate. The catalysed reaction is 4-(phosphooxy)-L-threonine + 2-oxoglutarate = (R)-3-hydroxy-2-oxo-4-phosphooxybutanoate + L-glutamate. The protein operates within amino-acid biosynthesis; L-serine biosynthesis; L-serine from 3-phospho-D-glycerate: step 2/3. Its pathway is cofactor biosynthesis; pyridoxine 5'-phosphate biosynthesis; pyridoxine 5'-phosphate from D-erythrose 4-phosphate: step 3/5. In terms of biological role, catalyzes the reversible conversion of 3-phosphohydroxypyruvate to phosphoserine and of 3-hydroxy-2-oxo-4-phosphonooxybutanoate to phosphohydroxythreonine. The protein is Phosphoserine aminotransferase of Bordetella avium (strain 197N).